The primary structure comprises 154 residues: Deoxyuridine 5'-triphosphate nucleotidohydrolase (154 aa).

Residues 72 to 74 (RSG), asparagine 85, 89 to 91 (LID), and methionine 99 contribute to the substrate site.

The protein belongs to the dUTPase family. It depends on Mg(2+) as a cofactor.

The enzyme catalyses dUTP + H2O = dUMP + diphosphate + H(+). It participates in pyrimidine metabolism; dUMP biosynthesis; dUMP from dCTP (dUTP route): step 2/2. This enzyme is involved in nucleotide metabolism: it produces dUMP, the immediate precursor of thymidine nucleotides and it decreases the intracellular concentration of dUTP so that uracil cannot be incorporated into DNA. The polypeptide is Deoxyuridine 5'-triphosphate nucleotidohydrolase (Psychrobacter cryohalolentis (strain ATCC BAA-1226 / DSM 17306 / VKM B-2378 / K5)).